Reading from the N-terminus, the 870-residue chain is MVKEKKKADKKGEKSARSPSSLSDNLDFSKQDGNTTRQEMSPAGVPLLGMQLNEVKPKKDRQNVQQNEDATQYEESILTKLIVESYEGEKVRGLYEGEGFAAFQGGCTYRGMFSEGLMHGQGTYIWADGLKYEGDFVKNVPMNHGVYTWPDGSMYEGEVVNGMRNGFGMFKCSTQPVSYIGHWCNGKRHGKGSIYYNQEGTCWYEGDWVQNIKKGWGIRCYKSGNIYEGQWEDNMRHGEGRMRWLTTNEEYTGRWERGIQNGFGTHTWFLKRIRSSQYPLRNEYIGEFVNGYRHGRGKFYYASGAMYDGEWVSNKKHGMGRLTFKNGRVYEGAFSNDHIAGFPDLEVEFISCLDLSSGVAPRLSRSAELIRKLDGSESHSVLGSSIELDLNLLLDMYPETVQPEEKKQVEYAVLRNITELRRIYSFYSSLGCGHSLDNTFLMTKLHFWRFLKDCKFHHHKLTLADMDRILSANNDIPVEEIHSPFTTILLRTFLNYLLHLAYHIYHEEFQKRSPSLFLCFTKLMTENIRPNAFQIKGNLFREQQRTLYSMSYMNKCWEIYLAYCRPSAAPPHEPTMKMRHFLWMLKDFKMINKELTAATFMEVIAEDNRFIYDGIDSNFEPELVFLEFFEALLSFAFICVTDQMTKSYTNVPADDVSGNKHETIYTILNQDAQNKSPSAVMSHESDAAHSDSARSSSSKLELSPDVNKIRKSEPKIKKSVSHERVSKMNFKLTGKGITFFSSESKKYERPKDDREEEFNTWVNNMYVFFVNTLFHAYKREEAIKEKIRADRLRSTAQAQQRKMEDDELEARLNIFILREEEAKRHDYEVDITVLKEPADVSSSHLILDPPKEDVTVSPSSKTITSKKKKK.

The span at Met-1–Ala-16 shows a compositional bias: basic and acidic residues. The segment at Met-1–Ala-43 is disordered. The segment covering Arg-17 to Glu-39 has biased composition (polar residues). 10 MORN repeats span residues Tyr-86–Thr-108, Tyr-109–Lys-131, Tyr-132–Met-154, Tyr-155–Val-177, Tyr-179–Thr-201, Tyr-204–Ile-226, Tyr-227–Glu-249, Tyr-251–Ile-273, Tyr-284–Met-306, and Tyr-307–Val-329. The interval Asn-674–Pro-704 is disordered. Positions His-683 to Ser-692 are enriched in basic and acidic residues. Over residues Ala-693–Ser-703 the composition is skewed to low complexity. Positions Lys-784 to Arg-811 form a coiled coil. The segment at Val-840–Lys-870 is disordered.

Interacts with RSPH6A. Does not appear to be part of the axonemal radial spoke complexes 1 or 2.

The protein localises to the cytoplasm. Its subcellular location is the cytoskeleton. It is found in the cilium axoneme. It localises to the cell projection. The protein resides in the cilium. The protein localises to the flagellum. Its function is as follows. May function as part of the axonemal radial spoke complex 3 (RS3). Radial spoke complexes are important for ciliary motility. The polypeptide is Radial spoke head 10 homolog B (RSPH10B) (Homo sapiens (Human)).